Here is a 294-residue protein sequence, read N- to C-terminus: Nucleophosmin (294 aa).

The residue at position 1 (methionine 1) is an N-acetylmethionine. Positions 1 to 117 are necessary for interaction with APEX1; sequence MEDSMDMDMS…PVHISGQHLV (117 aa). The tract at residues 1–186 is required for interaction with SENP3; the sequence is MEDSMDMDMS…DDDDFDDEEA (186 aa). Serine 4 carries the phosphoserine; by PLK1 and PLK2 modification. Serine 10 carries the phosphoserine modification. Residue lysine 27 forms a Glycyl lysine isopeptide (Lys-Gly) (interchain with G-Cter in SUMO2) linkage. The residue at position 32 (lysine 32) is an N6-acetyllysine; alternate. Lysine 32 is covalently cross-linked (Glycyl lysine isopeptide (Lys-Gly) (interchain with G-Cter in SUMO1); alternate). Lysine 32 is covalently cross-linked (Glycyl lysine isopeptide (Lys-Gly) (interchain with G-Cter in SUMO2); alternate). A Phosphoserine modification is found at serine 43. Tyrosine 67 carries the phosphotyrosine modification. At serine 70 the chain carries Phosphoserine. 2 positions are modified to phosphothreonine: threonine 75 and threonine 95. A compositionally biased stretch (acidic residues) spans 120 to 132; that stretch reads EEDAESEDEEEED. A disordered region spans residues 120–247; the sequence is EEDAESEDEE…PKGPSSVEDI (128 aa). Phosphoserine; by CDK2 is present on serine 125. 2 positions are modified to phosphoserine: serine 137 and serine 139. Lysine 141 participates in a covalent cross-link: Glycyl lysine isopeptide (Lys-Gly) (interchain with G-Cter in SUMO2). At lysine 150 the chain carries N6-acetyllysine; alternate. Lysine 150 is covalently cross-linked (Glycyl lysine isopeptide (Lys-Gly) (interchain with G-Cter in SUMO2); alternate). The short motif at 152-157 is the Nuclear localization signal element; that stretch reads PQKKVK. Residue lysine 154 is modified to N6-acetyllysine. Positions 161-187 are enriched in acidic residues; it reads DEDDDDDDEEDDDEDDDDDDFDDEEAE. Positions 187 to 215 are interaction with NOP2; it reads EEKAPVKKSIRDTPAKNAQKSNQNGKDSK. The segment covering 188–200 has biased composition (basic and acidic residues); sequence EKAPVKKSIRDTP. Residues 191–197 carry the Nuclear localization signal motif; that stretch reads PVKKSIR. Threonine 199 is modified (phosphothreonine; by CDK1, CDK2 and CDK6). The span at 202–222 shows a compositional bias: polar residues; it reads KNAQKSNQNGKDSKPSSTPRS. Residue serine 207 is modified to ADP-ribosylserine. Lysine 212 is subject to N6-acetyllysine. A Glycyl lysine isopeptide (Lys-Gly) (interchain with G-Cter in SUMO2) cross-link involves residue lysine 215. A Phosphothreonine; by CDK1 modification is found at threonine 219. A compositionally biased stretch (basic and acidic residues) spans 223–235; the sequence is KGQESFKKQEKTP. At serine 227 the chain carries Phosphoserine. Lysine 229 is modified (N6-acetyllysine). Residue lysine 230 is modified to N6-acetyllysine; alternate. Lysine 230 is covalently cross-linked (Glycyl lysine isopeptide (Lys-Gly) (interchain with G-Cter in SUMO); alternate). Residues threonine 234 and threonine 237 each carry the phosphothreonine; by CDK1 modification. Serine 242 and serine 243 each carry phosphoserine. Residues 243 to 294 form a required for nucleolar localization region; the sequence is SVEDIKAKMQASIEKGGSLPKVEAKFINYVKNCFRMTDQEAIQDLWQWRKSL. Residue lysine 248 forms a Glycyl lysine isopeptide (Lys-Gly) (interchain with G-Cter in SUMO1); alternate linkage. Glycyl lysine isopeptide (Lys-Gly) (interchain with G-Cter in SUMO2); alternate cross-links involve residues lysine 248 and lysine 250. Lysine 250 is modified (N6-acetyllysine; alternate). Serine 254 is modified (phosphoserine). Residue lysine 257 is modified to N6-acetyllysine; alternate. A Glycyl lysine isopeptide (Lys-Gly) (interchain with G-Cter in SUMO1); alternate cross-link involves residue lysine 257. A Glycyl lysine isopeptide (Lys-Gly) (interchain with G-Cter in SUMO2); alternate cross-link involves residue lysine 257. Lysine 257 bears the N6-acetyllysine mark. A Phosphoserine modification is found at serine 260. Residues lysine 263, lysine 267, and lysine 273 each participate in a glycyl lysine isopeptide (Lys-Gly) (interchain with G-Cter in SUMO2); alternate cross-link. Residue lysine 263 forms a Glycyl lysine isopeptide (Lys-Gly) (interchain with G-Cter in SUMO); alternate linkage. Lysine 267 and lysine 273 each carry N6-acetyllysine; alternate. Lysine 267 is covalently cross-linked (Glycyl lysine isopeptide (Lys-Gly) (interchain with G-Cter in SUMO1); alternate). At lysine 267 the chain carries N6-succinyllysine; alternate. Threonine 279 carries the phosphothreonine modification. The residue at position 292 (lysine 292) is an N6-acetyllysine.

It belongs to the nucleoplasmin family. In terms of assembly, decamer formed by two pentameric rings associated in a head-to-head fashion. Disulfide-linked dimers under certain conditions. The SWAP complex consists of NPM1, NCL, PARP1 and SWAP70. Interacts with NSUN2 and SENP3. Interacts with the methylated form of RPS10. Interacts (via N-terminal domain) with APEX1; the interaction is RNA-dependent and decreases in hydrogen peroxide-damaged cells. Interacts with isoform 1 of NEK2. Interacts with ROCK2 and BRCA2. Interacts with RPGR. Interacts with CENPW. Interacts with EIF2AK2/PKR. Interacts with CEBPA (isoform 4). Interacts with DDX31; this interaction prevents interaction between NPM1 and HDM2. Interacts with MYC; competitive with NOP53. Interacts with NOP53; the interaction is direct and competitive with MYC. Interacts with LRRC34. Interacts with RRP1B. Interacts with NPM3. Interacts with ALKBH2. Interacts with TTF1 (via C-terminal region). Interacts with NOP2. Interacts with ARID3C (via REKLES DOMAIN); the interaction mediates ARID3C nuclear shuttling. As to quaternary structure, (Microbial infection) Interacts with hepatitis delta virus S-HDAg. (Microbial infection) Interacts with HTLV1 Rex protein (via N-terminal nuclear localization signal). Acetylated at C-terminal lysine residues, thereby increasing affinity to histones. In terms of processing, ADP-ribosylated. Post-translationally, phosphorylated at Ser-4 by PLK1 and PLK2. Phosphorylation at Ser-4 by PLK2 in S phase is required for centriole duplication and is sufficient to trigger centriole replication. Phosphorylation at Ser-4 by PLK1 takes place during mitosis. Phosphorylated by CDK2 at Ser-125 and Thr-199. Phosphorylation at Thr-199 may trigger initiation of centrosome duplication. Phosphorylated by CDK1 at Thr-199, Thr-219, Thr-234 and Thr-237 during cell mitosis. When these four sites are phosphorated, RNA-binding activity seem to be abolished. May be phosphorylated at Ser-70 by NEK2. The Thr-199 phosphorylated form has higher affinity for ROCK2. CDK6 triggers Thr-199 phosphorylation when complexed to Kaposi's sarcoma herpesvirus (KSHV) V-cyclin, leading to viral reactivation by reducing viral LANA levels. Sumoylated by ARF. In terms of processing, ubiquitinated. Ubiquitination leads to proteasomal degradation. Deubiquitinated by USP36.

The protein localises to the nucleus. It is found in the nucleolus. It localises to the nucleoplasm. The protein resides in the cytoplasm. Its subcellular location is the cytoskeleton. The protein localises to the microtubule organizing center. It is found in the centrosome. Its function is as follows. Involved in diverse cellular processes such as ribosome biogenesis, centrosome duplication, protein chaperoning, histone assembly, cell proliferation, and regulation of tumor suppressors p53/TP53 and ARF. Binds ribosome presumably to drive ribosome nuclear export. Associated with nucleolar ribonucleoprotein structures and bind single-stranded nucleic acids. Acts as a chaperonin for the core histones H3, H2B and H4. Stimulates APEX1 endonuclease activity on apurinic/apyrimidinic (AP) double-stranded DNA but inhibits APEX1 endonuclease activity on AP single-stranded RNA. May exert a control of APEX1 endonuclease activity within nucleoli devoted to repair AP on rDNA and the removal of oxidized rRNA molecules. In concert with BRCA2, regulates centrosome duplication. Regulates centriole duplication: phosphorylation by PLK2 is able to trigger centriole replication. Negatively regulates the activation of EIF2AK2/PKR and suppresses apoptosis through inhibition of EIF2AK2/PKR autophosphorylation. Antagonizes the inhibitory effect of ATF5 on cell proliferation and relieves ATF5-induced G2/M blockade. In complex with MYC enhances the transcription of MYC target genes. May act as chaperonin or cotransporter in the nucleolar localization of transcription termination factor TTF1. The protein is Nucleophosmin of Homo sapiens (Human).